The following is a 412-amino-acid chain: Class E basic helix-loop-helix protein 40 (412 aa).

Positions 1-21 (MERIPSAQPPPTCLPKAPGLE) are disordered. The interval 1 to 139 (MERIPSAQPP…LSGRNVEAGQ (139 aa)) is essential for interaction with BMAL1, E-box binding and repressor activity against the CLOCK-BMAL1 heterodimer. The 56-residue stretch at 52–107 (TYKLPHRLIEKKRRDRINECIAQLKDLLPEHLKLTTLGHLEKAVVLELTLKHVKAL) folds into the bHLH domain. The necessary for interaction with RXRA and repressor activity against RXRA stretch occupies residues 75 to 79 (LKDLL). Residues 142-175 (FCSGFQTCAREVLQYLAKHENTRDLKSSQLVTHL) form the Orange domain. A Glycyl lysine isopeptide (Lys-Gly) (interchain with G-Cter in SUMO1, SUMO2 and SUMO3) cross-link involves residue Lys-159. Residue Lys-167 forms a Glycyl lysine isopeptide (Lys-Gly) (interchain with G-Cter in SUMO2) linkage. Disordered stretches follow at residues 182–256 (LLQG…ELRV) and 279–298 (KQES…SDDE). Ser-235 carries the phosphoserine modification. Lys-279 participates in a covalent cross-link: Glycyl lysine isopeptide (Lys-Gly) (interchain with G-Cter in SUMO1); alternate. A Glycyl lysine isopeptide (Lys-Gly) (interchain with G-Cter in SUMO1, SUMO2 and SUMO3); alternate cross-link involves residue Lys-279. Lys-279 is covalently cross-linked (Glycyl lysine isopeptide (Lys-Gly) (interchain with G-Cter in SUMO2); alternate). Residue Lys-288 forms a Glycyl lysine isopeptide (Lys-Gly) (interchain with G-Cter in SUMO2) linkage. Ser-383 bears the Phosphoserine mark.

Homodimer. Heterodimer with BHLHE41/DEC2. Interacts with TCF3/E47. Interacts with ubiquitin-conjugating enzyme UBE2I/UBC9. Interacts with HDAC1, SUMO1, RXRA and BMAL1. Ubiquitinated; which may lead to proteasomal degradation. In terms of processing, sumoylation inhibits its ubiquitination and promotes its negative regulation of the CLOCK-BMAL1 heterodimer transcriptional activator activity.

Its subcellular location is the cytoplasm. It localises to the nucleus. Its function is as follows. Transcriptional repressor involved in the regulation of the circadian rhythm by negatively regulating the activity of the clock genes and clock-controlled genes. Acts as the negative limb of a novel autoregulatory feedback loop (DEC loop) which differs from the one formed by the PER and CRY transcriptional repressors (PER/CRY loop). Both these loops are interlocked as it represses the expression of PER1/2 and in turn is repressed by PER1/2 and CRY1/2. Represses the activity of the circadian transcriptional activator: CLOCK-BMAL1|BMAL2 heterodimer by competing for the binding to E-box elements (5'-CACGTG-3') found within the promoters of its target genes. Negatively regulates its own expression and the expression of DBP and BHLHE41/DEC2. Acts as a corepressor of RXR and the RXR-LXR heterodimers and represses the ligand-induced RXRA and NR1H3/LXRA transactivation activity. May be involved in the regulation of chondrocyte differentiation via the cAMP pathway. Represses the transcription of NR0B2 and attentuates the transactivation of NR0B2 by the CLOCK-BMAL1 complex. Drives the circadian rhythm of blood pressure through transcriptional repression of ATP1B1 in the cardiovascular system. In Bos taurus (Bovine), this protein is Class E basic helix-loop-helix protein 40 (BHLHE40).